A 197-amino-acid polypeptide reads, in one-letter code: dITP/XTP pyrophosphatase (197 aa).

Residue 7–12 coordinates substrate; the sequence is TGNEQK. 2 residues coordinate Mg(2+): Glu-44 and Asp-73. The active-site Proton acceptor is Asp-73. Residues Thr-74, 156–159, Lys-179, and 184–185 contribute to the substrate site; these read FGYD and HR.

It belongs to the HAM1 NTPase family. In terms of assembly, homodimer. Mg(2+) is required as a cofactor.

It catalyses the reaction XTP + H2O = XMP + diphosphate + H(+). It carries out the reaction dITP + H2O = dIMP + diphosphate + H(+). The enzyme catalyses ITP + H2O = IMP + diphosphate + H(+). In terms of biological role, pyrophosphatase that catalyzes the hydrolysis of nucleoside triphosphates to their monophosphate derivatives, with a high preference for the non-canonical purine nucleotides XTP (xanthosine triphosphate), dITP (deoxyinosine triphosphate) and ITP. Seems to function as a house-cleaning enzyme that removes non-canonical purine nucleotides from the nucleotide pool, thus preventing their incorporation into DNA/RNA and avoiding chromosomal lesions. In Elusimicrobium minutum (strain Pei191), this protein is dITP/XTP pyrophosphatase.